The primary structure comprises 318 residues: Non-homologous end joining protein Ku (318 aa).

A Ku domain is found at alanine 10–lysine 193. Residues serine 259–serine 318 form a disordered region. Over residues glycine 266–proline 289 the composition is skewed to basic and acidic residues. Residues alanine 290–serine 318 are compositionally biased toward basic residues.

Belongs to the prokaryotic Ku family. Homodimer. Interacts with Sir2 and probably also with LigD; may form a trimeric complex during NHEJ.

Its function is as follows. With LigD forms a non-homologous end joining (NHEJ) repair enzyme which repairs blunt-end and 5'-overhang double strand breaks (DSB) with about 50% fidelity, and DSB with non-complementary 3' ends. Plays a partial role in NHEJ on 3'-overhang repair of complementary ends. NHEJ repairs DSB with blunt ends and 5' overhangs with a high level of nucleotide insertion/deletion, without a need for microhomology. This protein but not LigD also suppresses homologous recombination. Overexpression dramatically increases the efficiency of NHEJ with no effect on repair fidelity. The sequence is that of Non-homologous end joining protein Ku from Mycolicibacterium smegmatis (strain ATCC 700084 / mc(2)155) (Mycobacterium smegmatis).